The sequence spans 484 residues: uncharacterized protein (484 aa).

The FAD-binding PCMH-type domain occupies 47-226; that stretch reads TLPIPAAVVK…TEVTVKIFKF (180 aa).

The protein belongs to the FAD-binding oxidoreductase/transferase type 4 family.

This is an uncharacterized protein from Escherichia coli (strain K12).